Here is a 95-residue protein sequence, read N- to C-terminus: MVAYEKSPIVFLFATMMLVMFLFCGSGEARTLGYGSIKGDRIPACGYKNPNSCVKQPVNHYHRGCEKITRCARDAARYTESFNVDDDESPIINLH.

The signal sequence occupies residues 1 to 29 (MVAYEKSPIVFLFATMMLVMFLFCGSGEA). 2 cysteine pairs are disulfide-bonded: cysteine 45-cysteine 53 and cysteine 65-cysteine 71.

Belongs to the plant rapid alkalinization factor (RALF) family.

It localises to the secreted. Cell signaling peptide that may regulate plant stress, growth, and development. Mediates a rapid alkalinization of extracellular space by mediating a transient increase in the cytoplasmic Ca(2+) concentration leading to a calcium-dependent signaling events through a cell surface receptor and a concomitant activation of some intracellular mitogen-activated protein kinases. This chain is Protein RALF-like 16 (RALFL16), found in Arabidopsis thaliana (Mouse-ear cress).